Here is a 710-residue protein sequence, read N- to C-terminus: Polyribonucleotide nucleotidyltransferase (710 aa).

Mg(2+)-binding residues include D487 and D493. A KH domain is found at 554–613; that stretch reads PRIEVMNIPVDKIREVIGSGGKVIREIVEKTGAKINIEDDGTVKIASSSGKEIEAARKWI. The S1 motif domain maps to 623–691; it reads GQIYEGTVVK…ERGKVRLSMK (69 aa).

It belongs to the polyribonucleotide nucleotidyltransferase family. Mg(2+) is required as a cofactor.

The protein localises to the cytoplasm. It carries out the reaction RNA(n+1) + phosphate = RNA(n) + a ribonucleoside 5'-diphosphate. Functionally, involved in mRNA degradation. Catalyzes the phosphorolysis of single-stranded polyribonucleotides processively in the 3'- to 5'-direction. This Rhizobium rhizogenes (strain K84 / ATCC BAA-868) (Agrobacterium radiobacter) protein is Polyribonucleotide nucleotidyltransferase.